The sequence spans 250 residues: 3-deoxy-manno-octulosonate cytidylyltransferase (250 aa).

It belongs to the KdsB family.

It is found in the cytoplasm. It carries out the reaction 3-deoxy-alpha-D-manno-oct-2-ulosonate + CTP = CMP-3-deoxy-beta-D-manno-octulosonate + diphosphate. The protein operates within nucleotide-sugar biosynthesis; CMP-3-deoxy-D-manno-octulosonate biosynthesis; CMP-3-deoxy-D-manno-octulosonate from 3-deoxy-D-manno-octulosonate and CTP: step 1/1. It participates in bacterial outer membrane biogenesis; lipopolysaccharide biosynthesis. Functionally, activates KDO (a required 8-carbon sugar) for incorporation into bacterial lipopolysaccharide in Gram-negative bacteria. The polypeptide is 3-deoxy-manno-octulosonate cytidylyltransferase (Syntrophotalea carbinolica (strain DSM 2380 / NBRC 103641 / GraBd1) (Pelobacter carbinolicus)).